A 103-amino-acid chain; its full sequence is Small ribosomal subunit protein uS10 (103 aa).

Belongs to the universal ribosomal protein uS10 family. As to quaternary structure, part of the 30S ribosomal subunit.

Functionally, involved in the binding of tRNA to the ribosomes. The polypeptide is Small ribosomal subunit protein uS10 (Cellvibrio japonicus (strain Ueda107) (Pseudomonas fluorescens subsp. cellulosa)).